We begin with the raw amino-acid sequence, 304 residues long: Large ribosomal subunit protein uL18z (304 aa).

Residues 285–304 are disordered; it reads LNALNSSAGADDDDEEEDDE. Residues 294-304 are compositionally biased toward acidic residues; sequence ADDDDEEEDDE.

This sequence belongs to the universal ribosomal protein uL18 family. In terms of assembly, component of the large ribosomal subunit (LSU).

The protein localises to the cytoplasm. The protein resides in the nucleus. Component of the ribosome, a large ribonucleoprotein complex responsible for the synthesis of proteins in the cell. The small ribosomal subunit (SSU) binds messenger RNAs (mRNAs) and translates the encoded message by selecting cognate aminoacyl-transfer RNA (tRNA) molecules. The large subunit (LSU) contains the ribosomal catalytic site termed the peptidyl transferase center (PTC), which catalyzes the formation of peptide bonds, thereby polymerizing the amino acids delivered by tRNAs into a polypeptide chain. The nascent polypeptides leave the ribosome through a tunnel in the LSU and interact with protein factors that function in enzymatic processing, targeting, and the membrane insertion of nascent chains at the exit of the ribosomal tunnel. In Oryza sativa subsp. japonica (Rice), this protein is Large ribosomal subunit protein uL18z (RPL5A).